We begin with the raw amino-acid sequence, 98 residues long: Large ribosomal subunit protein uL23 (98 aa).

Belongs to the universal ribosomal protein uL23 family. Part of the 50S ribosomal subunit. Contacts protein L29, and trigger factor when it is bound to the ribosome.

Its function is as follows. One of the early assembly proteins it binds 23S rRNA. One of the proteins that surrounds the polypeptide exit tunnel on the outside of the ribosome. Forms the main docking site for trigger factor binding to the ribosome. The polypeptide is Large ribosomal subunit protein uL23 (Chromohalobacter salexigens (strain ATCC BAA-138 / DSM 3043 / CIP 106854 / NCIMB 13768 / 1H11)).